The primary structure comprises 122 residues: Large ribosomal subunit protein uL14 (122 aa).

It belongs to the universal ribosomal protein uL14 family. In terms of assembly, part of the 50S ribosomal subunit. Forms a cluster with proteins L3 and L19. In the 70S ribosome, L14 and L19 interact and together make contacts with the 16S rRNA in bridges B5 and B8.

Its function is as follows. Binds to 23S rRNA. Forms part of two intersubunit bridges in the 70S ribosome. The polypeptide is Large ribosomal subunit protein uL14 (Nitrosomonas europaea (strain ATCC 19718 / CIP 103999 / KCTC 2705 / NBRC 14298)).